We begin with the raw amino-acid sequence, 123 residues long: MPTVNQLIRKPRQTKPARNKVPALKGCPQRRGVCTRVYTTTPKKPNSALRKVAKVRLTTGIEAVCYIPGEGHNLQEHSVVLIRGGRVKDLPGVRYHILRGVLDTQGVKDRKQRRSLYGAKRPK.

Asp89 bears the 3-methylthioaspartic acid mark.

The protein belongs to the universal ribosomal protein uS12 family. In terms of assembly, part of the 30S ribosomal subunit. Contacts proteins S8 and S17. May interact with IF1 in the 30S initiation complex.

In terms of biological role, with S4 and S5 plays an important role in translational accuracy. Its function is as follows. Interacts with and stabilizes bases of the 16S rRNA that are involved in tRNA selection in the A site and with the mRNA backbone. Located at the interface of the 30S and 50S subunits, it traverses the body of the 30S subunit contacting proteins on the other side and probably holding the rRNA structure together. The combined cluster of proteins S8, S12 and S17 appears to hold together the shoulder and platform of the 30S subunit. The sequence is that of Small ribosomal subunit protein uS12 from Phenylobacterium zucineum (strain HLK1).